The primary structure comprises 357 residues: Inositol-tetrakisphosphate 1-kinase 3 (357 aa).

Residues Lys-56 and Lys-98 each coordinate 1D-myo-inositol 1,3,4-trisphosphate. 2 residues coordinate ATP: Arg-133 and Lys-183. 1D-myo-inositol 1,3,4-trisphosphate is bound by residues His-190 and Lys-222. ATP-binding positions include 211-222 (QEFVNHGGVLFK), Ser-237, and Ser-262. Asp-302, Asp-317, and Asn-319 together coordinate Mg(2+). Asn-319 contributes to the 1D-myo-inositol 1,3,4-trisphosphate binding site.

The protein belongs to the ITPK1 family. In terms of assembly, monomer. Requires Mg(2+) as cofactor. Expressed in roots, leaves, flowers, anthers and embryos.

It catalyses the reaction 1D-myo-inositol 3,4,5,6-tetrakisphosphate + ATP = 1D-myo-inositol 1,3,4,5,6-pentakisphosphate + ADP + H(+). The enzyme catalyses 1D-myo-inositol 1,3,4-trisphosphate + ATP = 1D-myo-inositol 1,3,4,5-tetrakisphosphate + ADP + H(+). The catalysed reaction is 1D-myo-inositol 1,3,4-trisphosphate + ATP = 1D-myo-inositol 1,3,4,6-tetrakisphosphate + ADP + H(+). Kinase that can phosphorylate various inositol polyphosphate such as Ins(3,4,5,6)P4 or Ins(1,3,4)P3 and participates in phytic acid biosynthesis in developing seeds. Phytic acid is the primary storage form of phosphorus in cereal grains and other plant seeds. The chain is Inositol-tetrakisphosphate 1-kinase 3 from Oryza sativa subsp. japonica (Rice).